Here is an 874-residue protein sequence, read N- to C-terminus: Bifunctional uridylyltransferase/uridylyl-removing enzyme (874 aa).

The tract at residues 1–332 is uridylyltransferase; the sequence is MTLQSPLTFR…NGGASEDAEI (332 aa). Positions 333-692 are uridylyl-removing; sequence IDEDFQRRGA…ISKKATRGGT (360 aa). In terms of domain architecture, HD spans 451-573; that stretch reads VDEHSIRLLK…VRDEEYLEYL (123 aa). 2 consecutive ACT domains span residues 693-777 and 800-874; these read EVFV…RTPN and LMEF…SVSA.

It belongs to the GlnD family. The cofactor is Mg(2+).

The enzyme catalyses [protein-PII]-L-tyrosine + UTP = [protein-PII]-uridylyl-L-tyrosine + diphosphate. It carries out the reaction [protein-PII]-uridylyl-L-tyrosine + H2O = [protein-PII]-L-tyrosine + UMP + H(+). Uridylyltransferase (UTase) activity is inhibited by glutamine, while glutamine activates uridylyl-removing (UR) activity. Its function is as follows. Modifies, by uridylylation and deuridylylation, the PII regulatory proteins (GlnB and homologs), in response to the nitrogen status of the cell that GlnD senses through the glutamine level. Under low glutamine levels, catalyzes the conversion of the PII proteins and UTP to PII-UMP and PPi, while under higher glutamine levels, GlnD hydrolyzes PII-UMP to PII and UMP (deuridylylation). Thus, controls uridylylation state and activity of the PII proteins, and plays an important role in the regulation of nitrogen assimilation and metabolism. The polypeptide is Bifunctional uridylyltransferase/uridylyl-removing enzyme (Vibrio campbellii (strain ATCC BAA-1116)).